The primary structure comprises 131 residues: L-ectoine synthase (131 aa).

Belongs to the ectoine synthase family.

The catalysed reaction is (2S)-4-acetamido-2-aminobutanoate = L-ectoine + H2O. Its pathway is amine and polyamine biosynthesis; ectoine biosynthesis; L-ectoine from L-aspartate 4-semialdehyde: step 3/3. Its function is as follows. Catalyzes the circularization of gamma-N-acetyl-alpha,gamma-diaminobutyric acid (ADABA) to ectoine (1,4,5,6-tetrahydro-2-methyl-4-pyrimidine carboxylic acid), which is an excellent osmoprotectant. In Nocardia farcinica (strain IFM 10152), this protein is L-ectoine synthase.